A 177-amino-acid chain; its full sequence is Alkyl hydroperoxide reductase AhpD (177 aa).

Cys131 functions as the Proton donor in the catalytic mechanism. A disulfide bridge connects residues Cys131 and Cys134. Cys134 acts as the Cysteine sulfenic acid (-SOH) intermediate in catalysis.

The protein belongs to the AhpD family. Homotrimer.

The enzyme catalyses N(6)-[(R)-dihydrolipoyl]-L-lysyl-[lipoyl-carrier protein] + a hydroperoxide = N(6)-[(R)-lipoyl]-L-lysyl-[lipoyl-carrier protein] + an alcohol + H2O. Its function is as follows. Antioxidant protein with alkyl hydroperoxidase activity. Required for the reduction of the AhpC active site cysteine residues and for the regeneration of the AhpC enzyme activity. The protein is Alkyl hydroperoxide reductase AhpD of Streptomyces avermitilis (strain ATCC 31267 / DSM 46492 / JCM 5070 / NBRC 14893 / NCIMB 12804 / NRRL 8165 / MA-4680).